Here is an 89-residue protein sequence, read N- to C-terminus: UPF0473 protein Helmi_02360 (89 aa).

The protein belongs to the UPF0473 family.

The chain is UPF0473 protein Helmi_02360 from Heliobacterium modesticaldum (strain ATCC 51547 / Ice1).